Consider the following 286-residue polypeptide: Undecaprenyl-diphosphatase (286 aa).

The next 7 helical transmembrane spans lie at 50-70 (PGVSVTAVIQLGSIVAVIAYF), 97-117 (LGIAMTIGTLPILFAGLAIKL), 127-147 (LRSVPAIAGVSILMALLLALA), 165-185 (GLLVGLAQVLALIPGVSRSGS), 200-220 (AARFSFLLGIPAITIAGLVEL), 230-250 (GGVLPLMVGIVSAAVVSWLAI), and 262-282 (TWVFVIYRLLFGILLLAWWAG).

It belongs to the UppP family.

The protein resides in the cell inner membrane. The catalysed reaction is di-trans,octa-cis-undecaprenyl diphosphate + H2O = di-trans,octa-cis-undecaprenyl phosphate + phosphate + H(+). In terms of biological role, catalyzes the dephosphorylation of undecaprenyl diphosphate (UPP). Confers resistance to bacitracin. The polypeptide is Undecaprenyl-diphosphatase (Synechococcus sp. (strain WH7803)).